The sequence spans 156 residues: Large ribosomal subunit protein uL22c (156 aa).

Belongs to the universal ribosomal protein uL22 family. Part of the 50S ribosomal subunit.

It is found in the plastid. The protein localises to the chloroplast. In terms of biological role, this protein binds specifically to 23S rRNA. Its function is as follows. The globular domain of the protein is located near the polypeptide exit tunnel on the outside of the subunit, while an extended beta-hairpin is found that lines the wall of the exit tunnel in the center of the 70S ribosome. In Buxus microphylla (Littleleaf boxwood), this protein is Large ribosomal subunit protein uL22c (rpl22).